The sequence spans 102 residues: Small ribosomal subunit protein uS10 (102 aa).

It belongs to the universal ribosomal protein uS10 family. As to quaternary structure, part of the 30S ribosomal subunit.

In terms of biological role, involved in the binding of tRNA to the ribosomes. This is Small ribosomal subunit protein uS10 from Cupriavidus metallidurans (strain ATCC 43123 / DSM 2839 / NBRC 102507 / CH34) (Ralstonia metallidurans).